We begin with the raw amino-acid sequence, 232 residues long: Large ribosomal subunit protein uL1 (232 aa).

This sequence belongs to the universal ribosomal protein uL1 family. As to quaternary structure, part of the 50S ribosomal subunit.

Its function is as follows. Binds directly to 23S rRNA. The L1 stalk is quite mobile in the ribosome, and is involved in E site tRNA release. In terms of biological role, protein L1 is also a translational repressor protein, it controls the translation of the L11 operon by binding to its mRNA. The protein is Large ribosomal subunit protein uL1 of Rhizobium rhizogenes (strain K84 / ATCC BAA-868) (Agrobacterium radiobacter).